The chain runs to 429 residues: 3-phosphoshikimate 1-carboxyvinyltransferase (429 aa).

3-phosphoshikimate contacts are provided by lysine 23, serine 24, and arginine 28. Lysine 23 is a phosphoenolpyruvate binding site. Glycine 95 and arginine 123 together coordinate phosphoenolpyruvate. The 3-phosphoshikimate site is built by serine 168, glutamine 170, aspartate 316, and lysine 343. Position 170 (glutamine 170) interacts with phosphoenolpyruvate. The active-site Proton acceptor is aspartate 316. 2 residues coordinate phosphoenolpyruvate: arginine 347 and arginine 389.

This sequence belongs to the EPSP synthase family. Monomer.

Its subcellular location is the cytoplasm. It carries out the reaction 3-phosphoshikimate + phosphoenolpyruvate = 5-O-(1-carboxyvinyl)-3-phosphoshikimate + phosphate. It participates in metabolic intermediate biosynthesis; chorismate biosynthesis; chorismate from D-erythrose 4-phosphate and phosphoenolpyruvate: step 6/7. Functionally, catalyzes the transfer of the enolpyruvyl moiety of phosphoenolpyruvate (PEP) to the 5-hydroxyl of shikimate-3-phosphate (S3P) to produce enolpyruvyl shikimate-3-phosphate and inorganic phosphate. The polypeptide is 3-phosphoshikimate 1-carboxyvinyltransferase (Bacillus cereus (strain B4264)).